Here is a 145-residue protein sequence, read N- to C-terminus: 3-dehydroquinate dehydratase (145 aa).

Catalysis depends on Tyr24, which acts as the Proton acceptor. Asn76, His82, and Asp89 together coordinate substrate. Catalysis depends on His102, which acts as the Proton donor. Residues 103–104 (LS) and Arg113 each bind substrate.

The protein belongs to the type-II 3-dehydroquinase family. As to quaternary structure, homododecamer.

It carries out the reaction 3-dehydroquinate = 3-dehydroshikimate + H2O. The protein operates within metabolic intermediate biosynthesis; chorismate biosynthesis; chorismate from D-erythrose 4-phosphate and phosphoenolpyruvate: step 3/7. Its function is as follows. Catalyzes a trans-dehydration via an enolate intermediate. In Nitrosomonas eutropha (strain DSM 101675 / C91 / Nm57), this protein is 3-dehydroquinate dehydratase.